The sequence spans 193 residues: Glycerol-3-phosphate acyltransferase (193 aa).

A run of 5 helical transmembrane segments spans residues 4 to 24 (LALIMIIIAYLLGSISSAVLI), 56 to 76 (GLVLLCDILKGMLPVWGGYFL), 80 to 100 (PLLLGIIAIAACLGHMYPLFF), 116 to 136 (APIGLDLTGLLFGTWVVIVLI), and 152 to 174 (PLFTWLVKPQYTLPVAMLSCLIV).

The protein belongs to the PlsY family. In terms of assembly, probably interacts with PlsX.

The protein localises to the cell inner membrane. The enzyme catalyses an acyl phosphate + sn-glycerol 3-phosphate = a 1-acyl-sn-glycero-3-phosphate + phosphate. It participates in lipid metabolism; phospholipid metabolism. Its function is as follows. Catalyzes the transfer of an acyl group from acyl-phosphate (acyl-PO(4)) to glycerol-3-phosphate (G3P) to form lysophosphatidic acid (LPA). This enzyme utilizes acyl-phosphate as fatty acyl donor, but not acyl-CoA or acyl-ACP. In Aliivibrio salmonicida (strain LFI1238) (Vibrio salmonicida (strain LFI1238)), this protein is Glycerol-3-phosphate acyltransferase.